The following is a 138-amino-acid chain: Large ribosomal subunit protein uL16 (138 aa).

Positions 1-13 (MLQPARRKYRKEQ) are enriched in basic residues. The segment at 1–22 (MLQPARRKYRKEQKGRNTGVAT) is disordered.

Belongs to the universal ribosomal protein uL16 family. In terms of assembly, part of the 50S ribosomal subunit.

Binds 23S rRNA and is also seen to make contacts with the A and possibly P site tRNAs. In Polaromonas sp. (strain JS666 / ATCC BAA-500), this protein is Large ribosomal subunit protein uL16.